The primary structure comprises 194 residues: Fibroblast growth factor 7 (194 aa).

The first 31 residues, 1–31 (MRKWILTRILPTPLYRPCFHLVCLVGTISLA), serve as a signal peptide directing secretion. Residues N45 and N149 are each glycosylated (N-linked (GlcNAc...) asparagine).

Belongs to the heparin-binding growth factors family. As to quaternary structure, interacts with FGFBP1. Interacts with FGFR2. Affinity between fibroblast growth factors (FGFs) and their receptors is increased by heparan sulfate glycosaminoglycans that function as coreceptors.

Growth factor active on keratinocytes. Possible major paracrine effector of normal epithelial cell proliferation. This chain is Fibroblast growth factor 7 (Fgf7), found in Rattus norvegicus (Rat).